The primary structure comprises 71 residues: Probable ribosome maturation protein RlbA (71 aa).

Positions 12-69 (ITLGQFLKLADVIQSGGMAKWFLSEHEVLVNDEPDNRRGRKLYVGDVVEIEGFGSFQV) constitute an S4 RNA-binding domain.

In terms of biological role, may assist in the assembly of the 50S subunit. The protein is Probable ribosome maturation protein RlbA of Bacillus subtilis (strain 168).